A 161-amino-acid chain; its full sequence is Large ribosomal subunit protein uL30m (161 aa).

The N-terminal 34 residues, 1-34, are a transit peptide targeting the mitochondrion; it reads MAGILRSIVQRPPGRLQTATKGVEPLVCVDWIRH.

Belongs to the universal ribosomal protein uL30 family. Component of the mitochondrial ribosome large subunit (39S) which comprises a 16S rRNA and about 50 distinct proteins.

It is found in the mitochondrion. This is Large ribosomal subunit protein uL30m (MRPL30) from Bos taurus (Bovine).